Reading from the N-terminus, the 276-residue chain is Homeobox-leucine zipper protein HOX22 (276 aa).

The segment at residues 70-130 is a DNA-binding region (homeobox); that stretch reads AGERKRRFTE…NKRARWRSKQ (61 aa). The tract at residues 129-173 is leucine-zipper; that stretch reads KQLEHDYAALRSKYDALHSRVESLKQEKLALTVQLHELRERLRER. A disordered region spans residues 170–212; sequence LREREERSGNGGAATTAASSSSCNGSGSEEVDDDDDKRNAAAG. The span at 182–197 shows a compositional bias: low complexity; it reads AATTAASSSSCNGSGS.

Belongs to the HD-ZIP homeobox family. Class I subfamily. As to expression, expressed in seedlings, roots, stems, leaf sheaths and blades and panicles.

The protein resides in the nucleus. In terms of biological role, probable transcription factor. This is Homeobox-leucine zipper protein HOX22 (HOX22) from Oryza sativa subsp. japonica (Rice).